Consider the following 32-residue polypeptide: Conotoxin pr6b (32 aa).

Residues P6, P13, P20, and P29 each carry the 4-hydroxyproline modification. 3 cysteine pairs are disulfide-bonded: C7/C18, C14/C23, and C17/C31.

Expressed by the venom duct.

Its subcellular location is the secreted. Its function is as follows. Intraperitoneal injection into fish (0.5 nmol) provokes vertical suspension and paralysis after 6 minutes. In Conus parius (Cone snail), this protein is Conotoxin pr6b.